Reading from the N-terminus, the 66-residue chain is Gallinacin-8 (66 aa).

Residues 1–19 form the signal peptide; the sequence is MKILYLLLAVLLTVLQSSL. Positions 20-25 are excised as a propeptide; that stretch reads GFMRVP. Cystine bridges form between C31–C60, C38–C54, and C43–C61.

Belongs to the beta-defensin family. In terms of tissue distribution, expressed in the liver, kidney, gall bladder, testis, ovary and male and femae reproductive tracts. Expressed in the ovarian stroma and the theca and granulosa layers of the ovarian follicle.

It localises to the secreted. It is found in the cytoplasmic granule. Has bactericidal activity. The polypeptide is Gallinacin-8 (GAL8) (Gallus gallus (Chicken)).